A 241-amino-acid chain; its full sequence is Probable transcriptional regulatory protein Neut_0281 (241 aa).

Belongs to the TACO1 family.

Its subcellular location is the cytoplasm. This is Probable transcriptional regulatory protein Neut_0281 from Nitrosomonas eutropha (strain DSM 101675 / C91 / Nm57).